A 372-amino-acid chain; its full sequence is Aminomethyltransferase (372 aa).

This sequence belongs to the GcvT family. In terms of assembly, the glycine cleavage system is composed of four proteins: P, T, L and H.

The enzyme catalyses N(6)-[(R)-S(8)-aminomethyldihydrolipoyl]-L-lysyl-[protein] + (6S)-5,6,7,8-tetrahydrofolate = N(6)-[(R)-dihydrolipoyl]-L-lysyl-[protein] + (6R)-5,10-methylene-5,6,7,8-tetrahydrofolate + NH4(+). Its function is as follows. The glycine cleavage system catalyzes the degradation of glycine. This Rubrobacter xylanophilus (strain DSM 9941 / JCM 11954 / NBRC 16129 / PRD-1) protein is Aminomethyltransferase.